Reading from the N-terminus, the 554-residue chain is Methyl-coenzyme M reductase II subunit alpha (554 aa).

Residue glutamine 151 coordinates coenzyme F430. Coenzyme B-binding positions include arginine 229, 260 to 261 (KH), and arginine 274. Residues tyrosine 336 and tyrosine 447 each coordinate coenzyme M.

It belongs to the methyl-coenzyme M reductase alpha subunit family. MCR is a hexamer of two alpha, two beta, and two gamma chains, forming a dimer of heterotrimers. Coenzyme F430 serves as cofactor.

The catalysed reaction is coenzyme B + methyl-coenzyme M = methane + coenzyme M-coenzyme B heterodisulfide. It functions in the pathway one-carbon metabolism; methyl-coenzyme M reduction; methane from methyl-coenzyme M: step 1/1. Functionally, component of the methyl-coenzyme M reductase (MCR) I that catalyzes the reductive cleavage of methyl-coenzyme M (CoM-S-CH3 or 2-(methylthio)ethanesulfonate) using coenzyme B (CoB or 7-mercaptoheptanoylthreonine phosphate) as reductant which results in the production of methane and the mixed heterodisulfide of CoB and CoM (CoM-S-S-CoB). This is the final step in methanogenesis. The protein is Methyl-coenzyme M reductase II subunit alpha (mrtA) of Methanothermus fervidus (strain ATCC 43054 / DSM 2088 / JCM 10308 / V24 S).